Consider the following 180-residue polypeptide: ATP-dependent protease subunit HslV (180 aa).

Thr-7 is an active-site residue. Positions 165, 168, and 171 each coordinate Na(+).

Belongs to the peptidase T1B family. HslV subfamily. As to quaternary structure, a double ring-shaped homohexamer of HslV is capped on each side by a ring-shaped HslU homohexamer. The assembly of the HslU/HslV complex is dependent on binding of ATP.

The protein resides in the cytoplasm. The catalysed reaction is ATP-dependent cleavage of peptide bonds with broad specificity.. With respect to regulation, allosterically activated by HslU binding. Functionally, protease subunit of a proteasome-like degradation complex believed to be a general protein degrading machinery. This chain is ATP-dependent protease subunit HslV, found in Bacillus cereus (strain Q1).